The primary structure comprises 672 residues: APC membrane recruitment protein 2 (672 aa).

The segment covering 1-21 (METGRSRGGGAAVSERGGGAR) has biased composition (gly residues). Disordered regions lie at residues 1 to 23 (METG…ARAG), 74 to 360 (TMPS…DPSA), and 443 to 560 (MLSQ…DALC). A compositionally biased stretch (low complexity) spans 142–158 (GSLASSSVAKSHSFFSL). Position 154 is a phosphoserine (S154). Basic and acidic residues-rich tracts occupy residues 163 to 175 (GRSE…HAEA) and 201 to 210 (RGKEEEEKAV). Phosphoserine occurs at positions 223, 227, and 244. The segment covering 230–254 (CVKEEPPRAARRPDSPGQDASRHAA) has biased composition (basic and acidic residues). The segment covering 255–269 (GEPAGGEQAPASAES) has biased composition (low complexity). A Phosphoserine modification is found at S284. A compositionally biased stretch (basic and acidic residues) spans 289–303 (SRGEDAEGHRREEKP). Residues 343-354 (ASAVPDPSSVDP) are compositionally biased toward low complexity. Residues S356 and S359 each carry the phosphoserine modification. Over residues 446–457 (QTEDQGQGTQEG) the composition is skewed to low complexity. Composition is skewed to basic and acidic residues over residues 478–488 (RCGEAAKDMSS) and 502–516 (QQKE…EHQE).

Belongs to the Amer family. As to quaternary structure, interacts with APC.

Its subcellular location is the cell membrane. Functionally, negative regulator of the canonical Wnt signaling pathway involved in neuroectodermal patterning. Acts by specifically binding phosphatidylinositol 4,5-bisphosphate (PtdIns(4,5)P2), translocating to the cell membrane and interacting with key regulators of the canonical Wnt signaling pathway, such as components of the beta-catenin destruction complex. This chain is APC membrane recruitment protein 2 (Amer2), found in Mus musculus (Mouse).